Consider the following 205-residue polypeptide: Ribonuclease HII (205 aa).

The region spanning 16–205 (VSEVGIDEVG…KSFLKKSNLF (190 aa)) is the RNase H type-2 domain. 3 residues coordinate a divalent metal cation: aspartate 22, glutamate 23, and aspartate 118.

It belongs to the RNase HII family. The cofactor is Mn(2+). It depends on Mg(2+) as a cofactor.

It is found in the cytoplasm. The catalysed reaction is Endonucleolytic cleavage to 5'-phosphomonoester.. Endonuclease that specifically degrades the RNA of RNA-DNA hybrids. The sequence is that of Ribonuclease HII from Prochlorococcus marinus (strain MIT 9215).